We begin with the raw amino-acid sequence, 216 residues long: Protein Syd (216 aa).

The protein belongs to the Syd family.

The protein resides in the cell inner membrane. Functionally, interacts with the SecY protein in vivo. May bind preferentially to an uncomplexed state of SecY, thus functioning either as a chelating agent for excess SecY in the cell or as a regulatory factor that negatively controls the translocase function. This chain is Protein Syd, found in Shewanella sp. (strain MR-7).